Here is a 230-residue protein sequence, read N- to C-terminus: Proteasome subunit beta 2 (230 aa).

Over residues methionine 1–aspartate 10 the composition is skewed to basic and acidic residues. The disordered stretch occupies residues methionine 1 to glutamate 29. Residues methionine 1–glycine 35 constitute a propeptide, removed in mature form; by autocatalysis. The Nucleophile role is filled by threonine 36.

The protein belongs to the peptidase T1B family. The 20S proteasome core is composed of 14 alpha and 14 beta subunits that assemble into four stacked heptameric rings, resulting in a barrel-shaped structure. The two inner rings, each composed of seven catalytic beta subunits, are sandwiched by two outer rings, each composed of seven alpha subunits. The catalytic chamber with the active sites is on the inside of the barrel. Has a gated structure, the ends of the cylinder being occluded by the N-termini of the alpha-subunits. Is capped at one or both ends by the proteasome regulatory ATPase, PAN.

Its subcellular location is the cytoplasm. It carries out the reaction Cleavage of peptide bonds with very broad specificity.. Its activity is regulated as follows. The formation of the proteasomal ATPase PAN-20S proteasome complex, via the docking of the C-termini of PAN into the intersubunit pockets in the alpha-rings, triggers opening of the gate for substrate entry. Interconversion between the open-gate and close-gate conformations leads to a dynamic regulation of the 20S proteasome proteolysis activity. Component of the proteasome core, a large protease complex with broad specificity involved in protein degradation. This Haloarcula marismortui (strain ATCC 43049 / DSM 3752 / JCM 8966 / VKM B-1809) (Halobacterium marismortui) protein is Proteasome subunit beta 2.